We begin with the raw amino-acid sequence, 693 residues long: TGF-beta-activated kinase 1 and MAP3K7-binding protein 2 (693 aa).

Positions 8–51 constitute a CUE domain; that stretch reads IDFQVLHDLRQKFPEVPEVVVSRCMLQNNNNLDACCAVLSQEST. The tract at residues 91 to 130 is disordered; the sequence is GREGSRMNGSRTLTHSISDGQLQGGQSNSELFQQEPQTAP. Over residues 97-130 the composition is skewed to polar residues; that stretch reads MNGSRTLTHSISDGQLQGGQSNSELFQQEPQTAP. The residue at position 173 (Arg-173) is an Asymmetric dimethylarginine. Positions 219–310 are disordered; that stretch reads ITTPGGTTRQ…SGSSQSSAHS (92 aa). The segment covering 220–231 has biased composition (low complexity); sequence TTPGGTTRQTQQ. Polar residues predominate over residues 232-282; it reads HSGWVSQFNPMNPQQVYQPSQPGPWTTCPASNPLSHTSSQQPNQQGHQTSH. Residues 286–310 show a composition bias toward low complexity; that stretch reads PISSPTTSQPPTIHSSGSSQSSAHS. A Glycyl lysine isopeptide (Lys-Gly) (interchain with G-Cter in SUMO) cross-link involves residue Lys-329. The tract at residues 330–381 is disordered; the sequence is LEPPQRNNSSKLRSSGPRTSSTSSSVNSQTLNRNQPTVYIAASPPNTDELMS. Residues 343 to 359 are compositionally biased toward low complexity; it reads SSGPRTSSTSSSVNSQT. Residues Ser-372, Ser-450, Ser-482, and Ser-524 each carry the phosphoserine modification. Positions 532–619 form a coiled coil; it reads YTQALLVHQK…TKEIDLFQAR (88 aa). Residue Lys-562 forms a Glycyl lysine isopeptide (Lys-Gly) (interchain with G-Cter in SUMO) linkage. Ser-582 is modified (phosphoserine). Lys-611 is covalently cross-linked (Glycyl lysine isopeptide (Lys-Gly) (interchain with G-Cter in ubiquitin)). Residues 642–663 are disordered; it reads PPKPKDQRSIIKTPKTQDTEDD. The segment at 663–693 adopts a RanBP2-type zinc-finger fold; sequence DEGAQWNCTACTFLNHPALIRCEQCEMPRHF. Cys-673 bears the (Microbial infection) S-methylcysteine mark. An interaction with polyubiquitin region spans residues 675–685; sequence FLNHPALIRCE.

Interacts with MAP3K7 and TRAF6. Identified in the TRIKA2 complex composed of MAP3K7, TAB1 and TAB2. Binds 'Lys-63'-linked polyubiquitin chains. Interacts with NCOR1 and HDAC3 to form a ternary complex. Interacts (via C-terminal) with NUMBL (via PTB domain). Interacts (via the C-terminus) with DYNC2I2 (via WD domains). Interacts with RBCK1. Interacts with TRIM5. Interacts with TRIM38 (via B30.2/SPRY domain), leading to its translocation to lysosomes and degradation. Interacts with ASB1; this interaction promotes TAB2 stability. In terms of processing, degraded in a lysosome-dependent manner following interaction with TRIM38. Post-translationally, SUMOylated by TRIM60; leading to inhibition of MAPK/NF-kappaB activation and the innate immune response. Ubiquitinated; following IL1 stimulation or TRAF6 overexpression. Ubiquitination involves RBCK1 leading to proteasomal degradation. Ubiquitinated at Lys-611 by TRIM45 leading to proteasomal degradation. In terms of processing, phosphorylated. Post-translationally, (Microbial infection) Methylated at Cys-673 by enteropathogenic E.coli protein NleE or S.flexneri protein OspZ: methylation disrupts zinc-binding and ability to bind 'Lys-63'-linked ubiquitin, leading to NF-kappa-B inactivation. As to expression, widely expressed. In the embryo, expressed in the ventricular trabeculae, endothelial cells of the conotruncal cushions of the outflow tract and in the endothelial cells lining the developing aortic valves.

The protein localises to the membrane. Its subcellular location is the endosome membrane. The protein resides in the lysosome membrane. It is found in the cytoplasm. It localises to the cytosol. In terms of biological role, adapter required to activate the JNK and NF-kappa-B signaling pathways through the specific recognition of 'Lys-63'-linked polyubiquitin chains by its RanBP2-type zinc finger (NZF). Acts as an adapter linking MAP3K7/TAK1 and TRAF6 to 'Lys-63'-linked polyubiquitin chains. The RanBP2-type zinc finger (NZF) specifically recognizes Lys-63'-linked polyubiquitin chains unanchored or anchored to the substrate proteins such as RIPK1/RIP1 and RIPK2: this acts as a scaffold to organize a large signaling complex to promote autophosphorylation of MAP3K7/TAK1, and subsequent activation of I-kappa-B-kinase (IKK) core complex by MAP3K7/TAK1. Also recognizes and binds Lys-63'-linked polyubiquitin chains of heterotypic 'Lys-63'-/'Lys-48'-linked branched ubiquitin chains. Regulates the IL1-mediated translocation of NCOR1 out of the nucleus. Involved in heart development. The polypeptide is TGF-beta-activated kinase 1 and MAP3K7-binding protein 2 (Homo sapiens (Human)).